The primary structure comprises 205 residues: uncharacterized protein (205 aa).

This is an uncharacterized protein from Caenorhabditis elegans.